The sequence spans 476 residues: Cytochrome P450 6B5 (476 aa).

C443 serves as a coordination point for heme.

It belongs to the cytochrome P450 family. Requires heme as cofactor.

Its subcellular location is the endoplasmic reticulum membrane. The protein localises to the microsome membrane. It catalyses the reaction an organic molecule + reduced [NADPH--hemoprotein reductase] + O2 = an alcohol + oxidized [NADPH--hemoprotein reductase] + H2O + H(+). Enables the insect to feed on furanocoumarin-producing plants and evolved as an adaptation for detoxification of xanthotoxin and other furanocoumarins. In Papilio glaucus (Eastern tiger swallowtail butterfly), this protein is Cytochrome P450 6B5 (CYP6B5).